Here is a 351-residue protein sequence, read N- to C-terminus: SKP1-like protein 21 (351 aa).

Residues 108-167 form an interaction with the F-box domain of F-box proteins region; sequence TSAADSLQLKPLVDLTSRALARIIEGKTPEEIREIFHLPDDLTEEEKLEPLKNTMDDPRI. Disordered regions lie at residues 216–240 and 330–351; these read VKTS…NGTC and VNFS…AGHK. Residues 217–230 are compositionally biased toward basic residues; it reads KTSKSKKKNKKRKE. Residues 330–342 are compositionally biased toward polar residues; it reads VNFSINGNGTSRR.

It belongs to the SKP1 family. In terms of assembly, part of a SCF (SKP1-cullin-F-box) protein ligase complex. As to expression, expressed in young seedlings, roots, leaves, floral stems, inflorescences, and siliques.

The protein localises to the nucleus. The protein operates within protein modification; protein ubiquitination. Its function is as follows. Involved in ubiquitination and subsequent proteasomal degradation of target proteins. Together with CUL1, RBX1 and a F-box protein, it forms a SCF E3 ubiquitin ligase complex. The functional specificity of this complex depends on the type of F-box protein. In the SCF complex, it serves as an adapter that links the F-box protein to CUL1. This is SKP1-like protein 21 (ASK21) from Arabidopsis thaliana (Mouse-ear cress).